A 346-amino-acid chain; its full sequence is Superficial pseudohyphal growth protein 1 (346 aa).

The interval 289 to 308 is disordered; the sequence is NFGEDEDNEEDNEDDLPDAA. Positions 291 to 305 are enriched in acidic residues; the sequence is GEDEDNEEDNEDDLP.

The protein resides in the nucleus. Functionally, probable transcription factor required for superficial pseudohyphal development in response to nitrogen starvation. In Saccharomyces cerevisiae (strain ATCC 204508 / S288c) (Baker's yeast), this protein is Superficial pseudohyphal growth protein 1 (SFG1).